The chain runs to 855 residues: DNA mismatch repair protein MutS (855 aa).

Residue 616 to 623 coordinates ATP; sequence GPNMGGKS.

Belongs to the DNA mismatch repair MutS family.

This protein is involved in the repair of mismatches in DNA. It is possible that it carries out the mismatch recognition step. This protein has a weak ATPase activity. In Salmonella paratyphi C (strain RKS4594), this protein is DNA mismatch repair protein MutS.